We begin with the raw amino-acid sequence, 151 residues long: Small ribosomal subunit protein uS15 (151 aa).

The segment at 1 to 20 (MARLHSGKRGSSGSTRPLRT) is disordered.

The protein belongs to the universal ribosomal protein uS15 family. In terms of assembly, part of the 30S ribosomal subunit.

The chain is Small ribosomal subunit protein uS15 from Methanococcus maripaludis (strain DSM 14266 / JCM 13030 / NBRC 101832 / S2 / LL).